The chain runs to 148 residues: Caltractin (148 aa).

4 EF-hand domains span residues 4–39 (EQKQ…LGFE), 40–75 (PKKE…KMGE), 77–112 (DSRE…LGEN), and 113–148 (LTDE…TSLF). Ca(2+)-binding residues include D17, D19, S21, T23, E28, D53, D55, S57, T59, and E64. Residues D126, D128, D130, E132, and E137 each coordinate Ca(2+).

Belongs to the centrin family. In terms of tissue distribution, ubiquitous.

Its function is as follows. This calcium-binding protein is found in the basal body complexes (the functional homolog of the centrosome in animal cell). In mitotic cells it is specifically associated with the poles of the mitotic spindles at the sites of the duplicated basal body complexes. This chain is Caltractin, found in Spermatozopsis similis (Green alga).